Here is a 601-residue protein sequence, read N- to C-terminus: DNA ligase 2 (601 aa).

Glu263 is an ATP binding site. Lys265 functions as the N6-AMP-lysine intermediate in the catalytic mechanism. ATP contacts are provided by Arg270, Arg285, Glu314, Phe354, Arg432, and Lys438.

The protein belongs to the ATP-dependent DNA ligase family. Requires Mg(2+) as cofactor.

It catalyses the reaction ATP + (deoxyribonucleotide)n-3'-hydroxyl + 5'-phospho-(deoxyribonucleotide)m = (deoxyribonucleotide)n+m + AMP + diphosphate.. Its function is as follows. DNA ligase that seals nicks in double-stranded DNA during DNA replication, DNA recombination and DNA repair. The protein is DNA ligase 2 of Thermofilum pendens (strain DSM 2475 / Hrk 5).